A 2167-amino-acid chain; its full sequence is SH3 and multiple ankyrin repeat domains protein 1 (2167 aa).

The tract at residues Met1–Ser63 is disordered. The span at Ser17–Gly32 shows a compositional bias: low complexity. The segment covering Pro33–Ala47 has biased composition (gly residues). Residue Arg43 is modified to Omega-N-methylarginine. Position 186 is a phosphotyrosine (Tyr186). ANK repeat units lie at residues Ser212–Phe242, Asp246–Tyr275, Arg279–Ile309, Asn313–Ala342, Ser346–Val375, and Asn379–Val407. Disordered stretches follow at residues Ser413–Pro432 and Pro454–Arg546. The span at Pro454–Thr479 shows a compositional bias: low complexity. Residues Pro527 to Gly542 are compositionally biased toward gly residues. Ser540 carries the post-translational modification Phosphoserine. Residue Arg544 is modified to Omega-N-methylarginine. The region spanning Val554 to Asn613 is the SH3 domain. A PDZ domain is found at Thr663 to Thr757. Phosphoserine is present on residues Ser671 and Ser791. The segment at Ile841 to Leu894 is disordered. Position 898 is a phosphoserine (Ser898). 2 disordered regions span residues Ser917–Thr1233 and Arg1245–Lys1290. Pro residues predominate over residues Ile928–Pro947. Omega-N-methylarginine is present on Arg958. Residues Pro969 to Gly980 are compositionally biased toward low complexity. Positions Ala1004 to Pro1028 are enriched in basic residues. Arg1059 carries the omega-N-methylarginine modification. Low complexity predominate over residues Ser1064–Ala1089. An omega-N-methylarginine mark is found at Arg1098 and Arg1109. Low complexity-rich tracts occupy residues Ser1132 to Arg1146 and Ser1171 to Thr1184. Positions Ser1203–Pro1224 are enriched in pro residues. A compositionally biased stretch (basic and acidic residues) spans Arg1245–Arg1256. Arg1257 is modified (asymmetric dimethylarginine). Phosphoserine is present on Ser1291. Disordered regions lie at residues Gly1308–Ser1331, Leu1361–Leu1417, Arg1429–Ala1458, Phe1500–Ala1725, Gly1740–Ser1790, Val1828–Ala1866, Pro1898–His1988, and Arg2002–Leu2029. A compositionally biased stretch (basic and acidic residues) spans Ala1363–Ser1372. A compositionally biased stretch (pro residues) spans Pro1378–Thr1395. Over residues Leu1396 to His1408 the composition is skewed to basic residues. Arg1429 is subject to Omega-N-methylarginine. Residue Ser1442 is modified to Phosphoserine. Residues Arg1530–Arg1541 show a composition bias toward low complexity. Pro residues predominate over residues Pro1589–Ala1615. The segment covering Asp1624 to Thr1641 has biased composition (polar residues). The segment covering Pro1648–Gly1676 has biased composition (pro residues). Positions Val1684–Leu1694 are enriched in basic and acidic residues. A compositionally biased stretch (low complexity) spans Glu1695–Ala1708. Residues Glu1709 to Val1724 are compositionally biased toward gly residues. Residues Pro1850–Leu1861 show a composition bias toward pro residues. Arg1901 is modified (omega-N-methylarginine). Composition is skewed to low complexity over residues Ser1934–Ser1945, Thr1960–Ser1985, and Arg2002–Ala2012. An omega-N-methylarginine mark is found at Arg2022, Arg2042, and Arg2080. Residues Trp2104–Arg2167 form the SAM domain.

Belongs to the SHANK family. May homomultimerize via its SAM domain. Interacts with the C-terminus of SSTR2 via the PDZ domain. Interacts with SHARPIN, SPTAN1, HOMER1 and DLGAP1/GKAP. Part of a complex with DLG4/PSD-95 and DLGAP1/GKAP. Interacts with BAIAP2. Interacts with IGSF9. Interacts with HOMER1 and HOMER3. As to expression, in brain, highly expressed in cortex, hippocampus and cerebellum.

It localises to the cytoplasm. The protein resides in the synapse. It is found in the postsynaptic density. Functionally, seems to be an adapter protein in the postsynaptic density (PSD) of excitatory synapses that interconnects receptors of the postsynaptic membrane including NMDA-type and metabotropic glutamate receptors, and the actin-based cytoskeleton. Plays a role in the structural and functional organization of the dendritic spine and synaptic junction. Overexpression promotes maturation of dendritic spines and the enlargement of spine heads via its ability to recruit Homer to postsynaptic sites, and enhances presynaptic function. The chain is SH3 and multiple ankyrin repeat domains protein 1 (Shank1) from Mus musculus (Mouse).